We begin with the raw amino-acid sequence, 670 residues long: MHHQQRMAALGTDKELSDLLDFSAMFSPPVSSGKNGPTSLASGHFTGSNVEDRSSSGSWGTGGHPSPSRNYGDGTPYDHMTSRDLGSHDNLSPPFVNSRIQSKTERGSYSSYGRENVQGCHQQSLLGGDMDMGNPGTLSPTKPGSQYYQYSSNNARRRPLHSSAMEVQTKKVRKVPPGLPSSVYAPSASTADYNRDSPGYPSSKPAASTFPSSFFMQDGHHSSDPWSSSSGMNQPGYGGMLGNSSHIPQSSSYCSLHPHERLSYPSHSSADINSSLPPMSTFHRSGTNHYSTSSCTPPANGTDSIMANRGTGAAGSSQTGDALGKALASIYSPDHTNNSFSSNPSTPVGSPPSLSAGTAVWSRNGGQASSSPNYEGPLHSLQSRIEDRLERLDDAIHVLRNHAVGPSTAVPGGHGDMHGIMGPSHNGAMGSLGSGYGTSLLSANRHSLMVGAHREDGVALRGSHSLLPNQVPVPQLPVQSATSPDLNPPQDPYRGMPPGLQGQSVSSGSSEIKSDDEGDENLQDTKSSEDKKLDDDKKDIKSITRSRSSNNDDEDLTPEQKAEREKERRMANNARERLRVRDINEAFKELGRMVQLHLKSDKPQTKLLILHQAVAVILSLEQQVRERNLNPKAACLKRREEEKVSSEPPPLSLAGPHPGMGDAANHMGQM.

Residues 1–83 form an essential for MYOD1 inhibition region; it reads MHHQQRMAAL…GTPYDHMTSR (83 aa). Disordered regions lie at residues 24 to 244, 262 to 320, 335 to 378, 406 to 426, 465 to 573, and 637 to 670; these read AMFS…LGNS, LSYP…SQTG, HTNN…EGPL, PSTA…PSHN, SLLP…MANN, and KRRE…MGQM. Polar residues predominate over residues 29–49; sequence PVSSGKNGPTSLASGHFTGSN. Residues S66, S87, and S92 each carry the phosphoserine modification. Polar residues-rich tracts occupy residues 107–125, 136–154, 205–215, and 265–305; these read GSYS…QQSL, GTLS…SSNN, PAASTFPSSFF, and PSHS…TDSI. A compositionally biased stretch (low complexity) spans 336–347; that stretch reads TNNSFSSNPSTP. Polar residues predominate over residues 364–373; it reads NGGQASSSPN. S371 carries the post-translational modification Phosphoserine. Residues 378–399 are leucine-zipper; it reads LHSLQSRIEDRLERLDDAIHVL. Low complexity-rich tracts occupy residues 466-479 and 502-511; these read LLPN…LPVQ and GQSVSSGSSE. Phosphoserine is present on S514. Composition is skewed to basic and acidic residues over residues 526-542 and 558-573; these read KSSE…DIKS and PEQK…MANN. The region spanning 567–620 is the bHLH domain; it reads ERRMANNARERLRVRDINEAFKELGRMVQLHLKSDKPQTKLLILHQAVAVILSL. The tract at residues 622–645 is class A specific domain; it reads QQVRERNLNPKAACLKRREEEKVS.

In terms of assembly, efficient DNA binding requires dimerization with another bHLH protein. Isoform 2 seems to form inactive heterodimers with MYOD1. Interacts with HIVEP2. Interacts with NEUROD2. Interacts with AGBL1. Interacts with BHLHA9. In terms of tissue distribution, expressed in the cerebral cortex, Purkinje and granule cell layers of the cerebellum, olfactory neuroepithelium, pyramidal cells of hippocampal layers CA1-CA4, and in the granular cells of the dentate gyrus.

The protein resides in the nucleus. Its function is as follows. Transcription factor that binds to the immunoglobulin enhancer Mu-E5/KE5-motif. Involved in the initiation of neuronal differentiation. Activates transcription by binding to the E box (5'-CANNTG-3'). Isoform 2 inhibits MYOD1 activation of the cardiac alpha-actin promoter. Binds to the E-box present in the somatostatin receptor 2 initiator element (SSTR2-INR) to activate transcription. May have a regulatory function in developmental processes as well as during neuronal plasticity. This chain is Transcription factor 4 (Tcf4), found in Mus musculus (Mouse).